The following is a 385-amino-acid chain: 8-amino-7-oxononanoate synthase (385 aa).

Substrate is bound at residue arginine 21. 108-109 (GF) contacts pyridoxal 5'-phosphate. Position 133 (histidine 133) interacts with substrate. Pyridoxal 5'-phosphate contacts are provided by serine 179, histidine 207, and threonine 233. An N6-(pyridoxal phosphate)lysine modification is found at lysine 236. Threonine 352 is a substrate binding site.

It belongs to the class-II pyridoxal-phosphate-dependent aminotransferase family. BioF subfamily. Homodimer. Pyridoxal 5'-phosphate is required as a cofactor.

The enzyme catalyses 6-carboxyhexanoyl-[ACP] + L-alanine + H(+) = (8S)-8-amino-7-oxononanoate + holo-[ACP] + CO2. The protein operates within cofactor biosynthesis; biotin biosynthesis. Functionally, catalyzes the decarboxylative condensation of pimeloyl-[acyl-carrier protein] and L-alanine to produce 8-amino-7-oxononanoate (AON), [acyl-carrier protein], and carbon dioxide. The protein is 8-amino-7-oxononanoate synthase of Salmonella paratyphi B (strain ATCC BAA-1250 / SPB7).